A 422-amino-acid polypeptide reads, in one-letter code: Signal recognition particle receptor FtsY (422 aa).

The disordered stretch occupies residues 39 to 86 (PERGVVDRSGGYTASSGITFSQTPTTQPAERIDTSGLPAVGDDATVPR). Over residues 50–66 (YTASSGITFSQTPTTQP) the composition is skewed to polar residues. Residues 230–237 (GVNGTGKT), 312–316 (DTAGR), and 374–377 (TKLD) contribute to the GTP site.

This sequence belongs to the GTP-binding SRP family. FtsY subfamily. As to quaternary structure, part of the signal recognition particle protein translocation system, which is composed of SRP and FtsY.

The protein resides in the cell membrane. Its subcellular location is the cytoplasm. The enzyme catalyses GTP + H2O = GDP + phosphate + H(+). In terms of biological role, involved in targeting and insertion of nascent membrane proteins into the cytoplasmic membrane. Acts as a receptor for the complex formed by the signal recognition particle (SRP) and the ribosome-nascent chain (RNC). This Mycobacterium bovis (strain ATCC BAA-935 / AF2122/97) protein is Signal recognition particle receptor FtsY.